A 1100-amino-acid chain; its full sequence is Exportin-T (1100 aa).

The protein belongs to the exportin family. Interacts with GSP1, GSP2, NSP1, NUP2 and UTP8.

The protein localises to the nucleus. The protein resides in the cytoplasm. Functionally, tRNA nucleus export receptor which facilitates tRNA translocation across the nuclear pore complex. Preferentially interacts with tRNAs with mature 5'- and 3'-termini and does not distinguish between intron-containing and spliced tRNAs. In the nucleus binds to tRNA and to the Ran-GTPases GSP1 or GSP2 in their active GTP-bound form. Docking of this trimeric complex to the nuclear pore complex (NPC) is mediated through binding to nucleoporins. Upon transit of a nuclear export complex into the cytoplasm, disassembling of the complex and hydrolysis of Ran-GTP to Ran-GDP cause release of the tRNA from the export receptor. The directionality of nuclear export is thought to be conferred by an asymmetric distribution of the GTP- and GDP-bound forms of Ran between the cytoplasm and nucleus. Involved in pre-tRNA splicing, probably by affecting the interaction of pre-tRNA with splicing endonuclease. This is Exportin-T (LOS1) from Saccharomyces cerevisiae (strain YJM789) (Baker's yeast).